A 542-amino-acid polypeptide reads, in one-letter code: Protein lin-9 homolog (542 aa).

A2 bears the N-acetylalanine mark. The segment at 2 to 296 (AELDQLPDES…QKQRPSRFFM (295 aa)) is sufficient for interaction with RB1. K21 is covalently cross-linked (Glycyl lysine isopeptide (Lys-Gly) (interchain with G-Cter in SUMO2)). Residues S65 and S95 each carry the phosphoserine modification. A phosphothreonine mark is found at T96 and T304. 2 positions are modified to phosphoserine: S309 and S321. The stretch at 355–413 (IKKEHIKKLREMNTDAEKLKSYSMPISIEFQRRYATIVLELEQLNKDLNKVLHKVQQYC) forms a coiled coil.

It belongs to the lin-9 family. In terms of assembly, component of the DREAM complex (also named LINC complex) at least composed of E2F4, E2F5, LIN9, LIN37, LIN52, LIN54, MYBL1, MYBL2, RBL1, RBL2, RBBP4, TFDP1 and TFDP2. The complex exists in quiescent cells where it represses cell cycle-dependent genes. It dissociates in S phase when LIN9, LIN37, LIN52 and LIN54 form a subcomplex that binds to MYBL2. Interacts with RB1.

It is found in the nucleus. Its subcellular location is the nucleoplasm. Acts as a tumor suppressor. Inhibits DNA synthesis. Its ability to inhibit oncogenic transformation is mediated through its association with RB1. Plays a role in the expression of genes required for the G1/S transition. The chain is Protein lin-9 homolog (LIN9) from Macaca fascicularis (Crab-eating macaque).